The chain runs to 188 residues: HGPRTase-like protein 1 (188 aa).

Belongs to the purine/pyrimidine phosphoribosyltransferase family. Archaeal HPRT subfamily.

In terms of biological role, may catalyze a purine salvage reaction, the substrate is unknown. This Haloquadratum walsbyi (strain DSM 16854 / JCM 12705 / C23) protein is HGPRTase-like protein 1.